The sequence spans 356 residues: MAPMGIRLSPLGIGVFCLLGLGVLYHVYSGFLTGKFSAFLLGDRAEDPGPGEDTVDLRELLAVSVRAAELGGLEVKKVRESNSLNEKAKGKTMEGADDKMTSGDVLSNKKMYHLIKNAFPALKVNTEEKVEADDEDAVSWDRNIPDDIKEQIKTKHVASESITMWIDPLDATQEYTENLVNYVTTMVCVAVNGKPVIGVIHKPFTGFTAWAMLDGGSSIKKRNSYNEKTPTFIVSRSHSGEVKEVTRQTFGNKTEIISAGGAGYKVLSLLDVTDDKQETADVYIHVTYIKKWDICAGNAILNALGGQMTTLKGEEIMYTGSELNKGGLLASIGMDHGVLVEKLSEKLQVNAKKPAK.

The chain crosses the membrane as a helical span at residues 11-31; the sequence is LGIGVFCLLGLGVLYHVYSGF. Positions 127, 167, 169, 170, and 293 each coordinate Mg(2+). Glutamate 127 is a substrate binding site. Residues 169-172 and aspartate 293 each bind substrate; that span reads LDAT.

It belongs to the inositol monophosphatase superfamily. The cofactor is Mg(2+).

The protein resides in the membrane. The catalysed reaction is a myo-inositol phosphate + H2O = myo-inositol + phosphate. The protein operates within polyol metabolism; myo-inositol biosynthesis; myo-inositol from D-glucose 6-phosphate: step 2/2. The polypeptide is Inositol monophosphatase 3 (bpnt2) (Xenopus tropicalis (Western clawed frog)).